A 38-amino-acid chain; its full sequence is DNA binding protein VP8 (38 aa).

The span at 1–16 (MKRKPMSRKASQKTFK) shows a compositional bias: basic residues. A disordered region spans residues 1 to 38 (MKRKPMSRKASQKTFKKNTGVQRMNHLNPRAMRGGIRL).

Belongs to the microviridae J protein family.

The protein localises to the virion. The protein resides in the host cytoplasm. Functionally, mediates ssDNA packaging into virion, it locates to the internal surface of the capsid, thereby displacing the internal scaffolding protein VP3 during virion formation. Additionally, protein VP8 plays a role in viral attachment to the host cell. The sequence is that of DNA binding protein VP8 from Bdellovibrio phage phiMH2K (Bacteriophage phiMH2K).